Consider the following 1054-residue polypeptide: Proteoglycan 4 (1054 aa).

A signal peptide spans methionine 1–serine 24. SMB domains lie at aspartate 26–serine 69 and proline 66–histidine 108. 14 disulfide bridges follow: cysteine 30/cysteine 34, cysteine 30/cysteine 46, cysteine 34/cysteine 64, cysteine 44/cysteine 46, cysteine 44/cysteine 57, cysteine 50/cysteine 56, cysteine 57/cysteine 64, cysteine 70/cysteine 74, cysteine 70/cysteine 86, cysteine 74/cysteine 104, cysteine 84/cysteine 86, cysteine 84/cysteine 97, cysteine 90/cysteine 96, and cysteine 97/cysteine 104. Asparagine 109 is a glycosylation site (N-linked (GlcNAc...) asparagine). A compositionally biased stretch (low complexity) spans serine 110–serine 125. Residues serine 110 to phenylalanine 764 form a disordered region. O-linked (GalNAc...) serine glycosylation occurs at serine 135. The span at glutamine 162–isoleucine 175 shows a compositional bias: low complexity. Residues glutamate 188 to lysine 200 show a composition bias toward basic and acidic residues. Over residues threonine 229 to threonine 238 the composition is skewed to pro residues. O-linked (GalNAc...) threonine glycans are attached at residues threonine 237 and threonine 250. Positions threonine 286 to alanine 295 are enriched in low complexity. Residue threonine 301 is glycosylated (O-linked (GalNAc...) threonine). Serine 302 carries O-linked (GalNAc...) serine glycosylation. The segment covering serine 302–glutamate 318 has biased composition (basic and acidic residues). O-linked (GalNAc...) threonine glycosylation is present at threonine 306. An O-linked (GalNAc...) serine glycan is attached at serine 313. Residues valine 317–proline 324 form a 1; approximate repeat. Residues valine 317–threonine 618 form a 37 X 8 AA repeats of K-X-P-X-P-T-T-X region. Polar residues predominate over residues proline 319 to alanine 328. The stretch at lysine 325–threonine 332 is one 2; approximate repeat. Serine 327 is a glycosylation site (O-linked (GalNAc...) serine). The segment covering proline 329–threonine 339 has biased composition (low complexity). Threonine 330, threonine 338, threonine 354, threonine 362, threonine 369, threonine 377, threonine 378, threonine 385, threonine 386, threonine 393, and threonine 394 each carry an O-linked (GalNAc...) threonine glycan. The 3; approximate repeat unit spans residues lysine 333–lysine 340. The stretch at glutamine 349 to alanine 356 is one 4; approximate repeat. Repeat 5 spans residues lysine 357–lysine 364. The segment covering lysine 364–glutamate 399 has biased composition (basic and acidic residues). The stretch at lysine 365–arginine 371 is one 6; approximate repeat. Repeat copies occupy residues lysine 372–proline 379, lysine 380–proline 387, lysine 388–proline 395, lysine 396–proline 403, and lysine 404–lysine 411. The segment covering proline 400 to proline 426 has biased composition (pro residues). Residues lysine 412 to proline 418 form a 12; approximate repeat. O-linked (GalNAc...) threonine glycans are attached at residues threonine 416, threonine 417, threonine 424, threonine 432, threonine 433, threonine 440, threonine 441, and threonine 448. 3 tandem repeats follow at residues lysine 419–proline 426, lysine 427–threonine 434, and lysine 435–threonine 442. Basic and acidic residues predominate over residues lysine 427–glutamate 550. The 16; approximate repeat unit spans residues lysine 443–arginine 450. 21 consecutive repeat copies span residues lysine 451–proline 458, lysine 459–proline 466, lysine 467–leucine 474, lysine 475–proline 482, lysine 483–proline 490, lysine 491–proline 498, lysine 499–proline 506, lysine 507–proline 514, lysine 515–proline 522, lysine 523–proline 530, lysine 531–proline 538, lysine 539–proline 546, lysine 547–proline 554, lysine 555–proline 562, lysine 563–proline 570, lysine 571–proline 578, lysine 579–arginine 586, lysine 587–proline 594, lysine 595–proline 602, lysine 603–proline 610, and lysine 611–threonine 618. Residues threonine 472, threonine 480, threonine 481, threonine 488, threonine 489, threonine 496, threonine 497, threonine 504, threonine 505, threonine 512, threonine 520, threonine 521, threonine 528, and threonine 529 are each glycosylated (O-linked (GalNAc...) threonine). Residues proline 551 to proline 562 are compositionally biased toward pro residues. O-linked (GalNAc...) threonine glycosylation is found at threonine 553, threonine 560, threonine 561, threonine 568, threonine 569, threonine 576, and threonine 577. A compositionally biased stretch (basic and acidic residues) spans lysine 563 to glutamate 614. 3 O-linked (GalNAc...) threonine glycosylation sites follow: threonine 592, threonine 600, and threonine 601. Low complexity predominate over residues proline 615–threonine 624. Threonine 622, threonine 624, threonine 628, threonine 629, and threonine 692 each carry an O-linked (GalNAc...) threonine glycan. The span at lysine 672 to lysine 699 shows a compositional bias: basic residues. Over residues threonine 700 to proline 712 the composition is skewed to low complexity. The segment covering glutamate 713 to proline 735 has biased composition (polar residues). An intrachain disulfide couples cysteine 795 to cysteine 1053. Hemopexin repeat units follow at residues glycine 797–isoleucine 840 and proline 841–leucine 888. An N-linked (GlcNAc...) asparagine glycan is attached at asparagine 808. Residue threonine 810 is glycosylated (O-linked (GalNAc...) threonine). An N-linked (GlcNAc...) asparagine glycan is attached at asparagine 938.

In terms of assembly, homodimer; disulfide-linked. In terms of processing, N-glycosylated. Post-translationally, O-glycosylated; contains glycosaminoglycan chondroitin sulfate and keratan sulfate. O-glycosylated with sialylated oligosaccharides which are predominantly represented by the monosialylated core type I structure, NeuNAcalpha2-3Galbeta1-3GalNAc, with smaller amounts of disialylated O-glycans. The disulfide bond between Cys-795 and Cys-1053 is essential for protein cleavage. In terms of processing, proteolytically cleaved by cathepsin CTSG. Highly expressed in cartilage, bone and liver and weakly expressed in heart, brain and muscle. Expressed in the surface chondrocytes and in synovial intimal cells. Isoform B is expressed in bone, small intestine, muscle, testis, heart, liver and lung. Isoform C and isoform D are widely expressed.

The protein localises to the secreted. Plays a role in boundary lubrication within articulating joints. Prevents protein deposition onto cartilage from synovial fluid by controlling adhesion-dependent synovial growth and inhibiting the adhesion of synovial cells to the cartilage surface. The sequence is that of Proteoglycan 4 (Prg4) from Mus musculus (Mouse).